The following is a 243-amino-acid chain: Adenylate kinase 4 (243 aa).

40–45 (GSGKGT) provides a ligand contact to ATP. The tract at residues 60 to 89 (ATGDMLRAAVAAKTPLGVKAKEAMDKGELV) is NMP. AMP contacts are provided by residues Thr-61, Arg-66, 87–89 (ELV), 115–118 (GFPR), and Gln-122. The LID stretch occupies residues 156–193 (GRWIHPSSGRSYHTKFAPPKVPGVDDVTGEPLIQRKDD). Arg-157 lines the ATP pocket. The AMP site is built by Arg-190 and Arg-201.

The protein belongs to the adenylate kinase family.

The protein localises to the cytoplasm. It carries out the reaction AMP + ATP = 2 ADP. Functionally, catalyzes the reversible transfer of the terminal phosphate group between ATP and AMP. Plays an important role in cellular energy homeostasis and in adenine nucleotide metabolism. This is Adenylate kinase 4 (ADK-B) from Oryza sativa subsp. japonica (Rice).